A 153-amino-acid polypeptide reads, in one-letter code: Actin-related protein 2/3 complex subunit 5-like protein (153 aa).

S64 bears the Phosphoserine mark.

It belongs to the ARPC5 family. As to quaternary structure, may be a component of the Arp2/3 complex in which it may replace ARPC5.

It localises to the cytoplasm. The protein localises to the cytoskeleton. The protein resides in the cell projection. In terms of biological role, may function as component of the Arp2/3 complex which is involved in regulation of actin polymerization and together with an activating nucleation-promoting factor (NPF) mediates the formation of branched actin networks. The protein is Actin-related protein 2/3 complex subunit 5-like protein (ARPC5L) of Bos taurus (Bovine).